A 459-amino-acid chain; its full sequence is Chaperone SurA (459 aa).

The N-terminal stretch at 1-23 (MNHRLVALSVASLALLAPLTVPA) is a signal peptide. PpiC domains lie at 197 to 301 (VQQI…KVLE) and 312 to 411 (VTQS…QLME).

The protein localises to the periplasm. The enzyme catalyses [protein]-peptidylproline (omega=180) = [protein]-peptidylproline (omega=0). Functionally, chaperone involved in the correct folding and assembly of outer membrane proteins. Recognizes specific patterns of aromatic residues and the orientation of their side chains, which are found more frequently in integral outer membrane proteins. May act in both early periplasmic and late outer membrane-associated steps of protein maturation. The polypeptide is Chaperone SurA (Albidiferax ferrireducens (strain ATCC BAA-621 / DSM 15236 / T118) (Rhodoferax ferrireducens)).